The chain runs to 156 residues: Small ribosomal subunit protein uS7 (156 aa).

It belongs to the universal ribosomal protein uS7 family. In terms of assembly, part of the 30S ribosomal subunit. Contacts proteins S9 and S11.

Its function is as follows. One of the primary rRNA binding proteins, it binds directly to 16S rRNA where it nucleates assembly of the head domain of the 30S subunit. Is located at the subunit interface close to the decoding center, probably blocks exit of the E-site tRNA. The chain is Small ribosomal subunit protein uS7 from Xanthobacter autotrophicus (strain ATCC BAA-1158 / Py2).